The chain runs to 660 residues: Bifunctional polymyxin resistance protein ArnA (660 aa).

Positions 1-304 (MKTVVFAYHD…TLGLVQGSRL (304 aa)) are formyltransferase ArnAFT. Residue 86–88 (HLI) participates in (6R)-10-formyltetrahydrofolate binding. Catalysis depends on H104, which acts as the Proton donor; for formyltransferase activity. Residues R114 and 136–140 (VKRAD) each bind (6R)-10-formyltetrahydrofolate. Positions 314 to 660 (RRTRVLILGV…RTVDLTDKPS (347 aa)) are dehydrogenase ArnADH. NAD(+)-binding positions include D347 and 368-369 (DI). UDP-alpha-D-glucuronate-binding positions include A393, Y398, and 432-433 (TS). E434 acts as the Proton acceptor; for decarboxylase activity in catalysis. UDP-alpha-D-glucuronate contacts are provided by residues R460, N492, 526 to 535 (KLIDGGKQKR), and Y613. Residue R619 is the Proton donor; for decarboxylase activity of the active site.

It in the N-terminal section; belongs to the Fmt family. UDP-L-Ara4N formyltransferase subfamily. This sequence in the C-terminal section; belongs to the NAD(P)-dependent epimerase/dehydratase family. UDP-glucuronic acid decarboxylase subfamily. Homohexamer, formed by a dimer of trimers.

It carries out the reaction UDP-alpha-D-glucuronate + NAD(+) = UDP-beta-L-threo-pentopyranos-4-ulose + CO2 + NADH. The enzyme catalyses UDP-4-amino-4-deoxy-beta-L-arabinose + (6R)-10-formyltetrahydrofolate = UDP-4-deoxy-4-formamido-beta-L-arabinose + (6S)-5,6,7,8-tetrahydrofolate + H(+). Its pathway is nucleotide-sugar biosynthesis; UDP-4-deoxy-4-formamido-beta-L-arabinose biosynthesis; UDP-4-deoxy-4-formamido-beta-L-arabinose from UDP-alpha-D-glucuronate: step 1/3. It participates in nucleotide-sugar biosynthesis; UDP-4-deoxy-4-formamido-beta-L-arabinose biosynthesis; UDP-4-deoxy-4-formamido-beta-L-arabinose from UDP-alpha-D-glucuronate: step 3/3. The protein operates within bacterial outer membrane biogenesis; lipopolysaccharide biosynthesis. Bifunctional enzyme that catalyzes the oxidative decarboxylation of UDP-glucuronic acid (UDP-GlcUA) to UDP-4-keto-arabinose (UDP-Ara4O) and the addition of a formyl group to UDP-4-amino-4-deoxy-L-arabinose (UDP-L-Ara4N) to form UDP-L-4-formamido-arabinose (UDP-L-Ara4FN). The modified arabinose is attached to lipid A and is required for resistance to polymyxin and cationic antimicrobial peptides. The protein is Bifunctional polymyxin resistance protein ArnA of Escherichia coli O81 (strain ED1a).